The primary structure comprises 389 residues: Acetate kinase (389 aa).

N7 contacts Mg(2+). ATP is bound at residue K14. R88 serves as a coordination point for substrate. The Proton donor/acceptor role is filled by D145. ATP-binding positions include 205–209 (HLGNG), 279–281 (DLR), and 324–328 (GIGEN). E375 lines the Mg(2+) pocket.

The protein belongs to the acetokinase family. Homodimer. Mg(2+) is required as a cofactor. The cofactor is Mn(2+).

Its subcellular location is the cytoplasm. It carries out the reaction acetate + ATP = acetyl phosphate + ADP. The protein operates within metabolic intermediate biosynthesis; acetyl-CoA biosynthesis; acetyl-CoA from acetate: step 1/2. Its function is as follows. Catalyzes the formation of acetyl phosphate from acetate and ATP. Can also catalyze the reverse reaction. The sequence is that of Acetate kinase from Sulfurimonas denitrificans (strain ATCC 33889 / DSM 1251) (Thiomicrospira denitrificans (strain ATCC 33889 / DSM 1251)).